We begin with the raw amino-acid sequence, 366 residues long: Methyltransferase calH (366 aa).

S-adenosyl-L-methionine contacts are provided by residues Thr189, Asp216, and 245–246 (NA).

The protein belongs to the class I-like SAM-binding methyltransferase superfamily.

Its pathway is secondary metabolite biosynthesis. Its function is as follows. Methyltransferase; part of the gene cluster that mediates the biosynthesis of calbistrin A and related compounds. Calbistrin A is a secondary metabolite with an interesting structure that was recently found to have bioactivity against leukemia cells. It consists of two polyketides linked by an ester bond: a bicyclic decalin containing polyketide and a linear 12 carbon dioic acid structure. The polyketide synthase calA is probably responsible for forming the decalin moiety. Because calA lacks a designated enoylreductase (ER) domain, the required activity is provided by the trans-enoyl reductase calK. Following release from the PKS, calF then probably catalyzes the oxidation and the subsequent Diels Alder cycloisomerization that lead to the formation of the decalin moiety. The decalin polyketide backbone includes two C-methyl groups, at C7 and C11 in backbone, of which the C7 position is probably methylated by the methyltransferase domain of calA. A candidate for adding the methyl group at C11, if not done by CalA, is the cluster methyltransferase calH. Several additional tailoring enzymes within the cluster could be involved in the modification of the decalin polyketide product. Those include the 3 cytochrome P450 monooxygenases CalE, CalG and CalL, of which one might be responsible for the introduction of the extra hydroxyl group attached to the backbone of the decalin moiety, at position C9 in the backbone, that allows for attachment of the linear moiety. One tailoring enzyme activity that is expected to be involved in biosynthesis of calbistrin is an acyltransferase for connecting the two polyketide synthase products, and which could be performed by the cluster acyltransferase calJ. The enzyme responsible for the biosynthesis of the linear moiety, probably a second PKS, has not been identified yet. The sequence is that of Methyltransferase calH from Penicillium decumbens.